The sequence spans 189 residues: Peptidyl-tRNA hydrolase (189 aa).

A tRNA-binding site is contributed by Tyr-18. The Proton acceptor role is filled by His-23. Positions 67, 69, and 115 each coordinate tRNA.

Belongs to the PTH family. As to quaternary structure, monomer.

It is found in the cytoplasm. It carries out the reaction an N-acyl-L-alpha-aminoacyl-tRNA + H2O = an N-acyl-L-amino acid + a tRNA + H(+). Its function is as follows. Hydrolyzes ribosome-free peptidyl-tRNAs (with 1 or more amino acids incorporated), which drop off the ribosome during protein synthesis, or as a result of ribosome stalling. Catalyzes the release of premature peptidyl moieties from peptidyl-tRNA molecules trapped in stalled 50S ribosomal subunits, and thus maintains levels of free tRNAs and 50S ribosomes. This Leptospira borgpetersenii serovar Hardjo-bovis (strain JB197) protein is Peptidyl-tRNA hydrolase.